A 463-amino-acid chain; its full sequence is MNTNQIILTDQGDNYVNLWSHVAQDLYNHYGETLYNSWFSKVNFIESSLNTVILCAPTNFVRDWIKSKYSMVILQLFQHYNNTIKSIDIITKELPGTTQTVIELPTKTFADIGSSELNSENIFSTLDVRFTFDNFVVGAPNELAYAAARAVAESSGAVSESNPLFLYGGVGLGKTHLMHAIGWYIKQNNPSRKVIYMSAEKFMYQFVKALRNKEVILFKEKFRSVDVLMIDDIQFICGKDSTQEEFFHTFNTLIDNNRQMVISCDRSPSDLDNIEDRIKSRLGWGLVADVHSTTYELRLGILESKIEQMNVKIPKDVIDFLASKIVSNVRELEGALNKVIAHSNFTLKEITLENTQNILRDLLRSNERIITVEDIQKKVASRYNIKLSDMSSSRRLREVARPRQIAMYLSKALTLKSLADIGKKFGKKDHTTVMYAIKKVEELLENDIELREEINLLMKILQH.

A domain I, interacts with DnaA modulators region spans residues Met1–Thr83. The interval Thr83 to Ser124 is domain II. Residues Thr125–Ser343 are domain III, AAA+ region. ATP is bound by residues Gly171, Gly173, Lys174, and Thr175. The domain IV, binds dsDNA stretch occupies residues Asn344–His463.

It belongs to the DnaA family. In terms of assembly, oligomerizes as a right-handed, spiral filament on DNA at oriC.

The protein resides in the cytoplasm. Plays an essential role in the initiation and regulation of chromosomal replication. ATP-DnaA binds to the origin of replication (oriC) to initiate formation of the DNA replication initiation complex once per cell cycle. Binds the DnaA box (a 9 base pair repeat at the origin) and separates the double-stranded (ds)DNA. Forms a right-handed helical filament on oriC DNA; dsDNA binds to the exterior of the filament while single-stranded (ss)DNA is stabiized in the filament's interior. The ATP-DnaA-oriC complex binds and stabilizes one strand of the AT-rich DNA unwinding element (DUE), permitting loading of DNA polymerase. After initiation quickly degrades to an ADP-DnaA complex that is not apt for DNA replication. Binds acidic phospholipids. This Rickettsia akari (strain Hartford) protein is Chromosomal replication initiator protein DnaA.